Consider the following 561-residue polypeptide: Mesoderm induction early response protein 2 (561 aa).

Disordered stretches follow at residues Met-1–Asn-28 and Gln-52–Leu-188. At Ser-11 the chain carries Phosphoserine. Polar residues predominate over residues Gln-140–Ser-165. The ELM2 domain occupies Lys-195–Val-292. An SANT domain is found at Asp-297–Arg-349. The interval Gly-360 to Pro-515 is disordered. Low complexity predominate over residues Leu-417 to Gly-428. A compositionally biased stretch (pro residues) spans Ser-439–Asp-451. Low complexity predominate over residues Pro-453 to Ala-482.

In terms of assembly, part of a complex containing at least CDYL, MIER1, MIER2, HDAC1 and HDAC2.

It localises to the nucleus. Functionally, transcriptional repressor. In Bos taurus (Bovine), this protein is Mesoderm induction early response protein 2 (MIER2).